We begin with the raw amino-acid sequence, 73 residues long: UPF0235 protein LBL_1291 (73 aa).

The protein belongs to the UPF0235 family.

The protein is UPF0235 protein LBL_1291 of Leptospira borgpetersenii serovar Hardjo-bovis (strain L550).